A 201-amino-acid polypeptide reads, in one-letter code: Probable GTP-binding protein EngB (201 aa).

In terms of domain architecture, EngB-type G spans 21–191; the sequence is PEAQIALAGR…WQELARAAGV (171 aa). GTP is bound by residues 29-36, 56-60, 75-78, 142-145, and 168-172; these read GRSNVGKS, GKTRS, DLPG, TKAD, and VLTSS. Mg(2+) contacts are provided by S36 and T58.

This sequence belongs to the TRAFAC class TrmE-Era-EngA-EngB-Septin-like GTPase superfamily. EngB GTPase family. Mg(2+) serves as cofactor.

Necessary for normal cell division and for the maintenance of normal septation. This is Probable GTP-binding protein EngB from Desulfovibrio desulfuricans (strain ATCC 27774 / DSM 6949 / MB).